We begin with the raw amino-acid sequence, 624 residues long: Laccase-1 (624 aa).

The N-terminal stretch at 1–20 is a signal peptide; that stretch reads MRGLAKLFFLSCSFVSLVSS. Plastocyanin-like domains are found at residues 72 to 183 and 195 to 343; these read FASP…HSPN and DRIV…CMFG. Cu cation-binding residues include histidine 117 and histidine 119. Cysteine 138 and cysteine 578 form a disulfide bridge. Residue asparagine 149 is glycosylated (N-linked (GlcNAc...) asparagine). Positions 162 and 164 each coordinate Cu cation. 2 N-linked (GlcNAc...) asparagine glycosylation sites follow: asparagine 242 and asparagine 430. The Plastocyanin-like 3 domain maps to 469–562; the sequence is IIINNLDTVI…GKLAVIVVQP (94 aa). The Cu cation site is built by histidine 480, histidine 483, and histidine 485. N-linked (GlcNAc...) asparagine glycosylation occurs at asparagine 503. Residues histidine 543, cysteine 544, histidine 545, and histidine 549 each coordinate Cu cation. Residues 579–604 are disordered; that stretch reads ANTDPNAFGPAKRSSSPSIQSSKTSS. Residues 592-604 are compositionally biased toward low complexity; it reads SSSPSIQSSKTSS.

The protein belongs to the multicopper oxidase family. Cu cation is required as a cofactor.

It is found in the secreted. Its subcellular location is the cell wall. The enzyme catalyses 4 hydroquinone + O2 = 4 benzosemiquinone + 2 H2O. Its function is as follows. Laccase that catalyzes the oxidation of certain aromatic compounds, including L-dopa, to quinones, which then polymerize to melanin. Able to oxidize a wide variety of aromatic diphenol and diamino groups in the ortho, meta, and para positions but not monophenolic groups such as in phenol, tyramine, or tyrosine. Plays an important role in virulence. Plays a role in dissemination to extrapulmonary sites but is not involved in pulmonary growth or in elicitation of cellular immune responses in the lung. The protein is Laccase-1 of Cryptococcus neoformans var. neoformans serotype D (strain B-3501A) (Filobasidiella neoformans).